The primary structure comprises 438 residues: Mannose-1-phosphate guanylyltransferase regulatory subunit alpha (438 aa).

The substrate-binding domain stretch occupies residues 2–260 (LKAVILIGGP…PNWWSQLKTA (259 aa)). GDP-alpha-D-mannose-binding residues include Glu87 and Gln256. The tract at residues 282-438 (LANVGIKRGE…SRSFKNEIIL (157 aa)) is hexapeptide repeat domain. The C-loop stretch occupies residues 373–402 (TPSDPDPNKPFAKMENPPLFNNEGKLNPSI).

This sequence belongs to the transferase hexapeptide repeat family. As to quaternary structure, component of the GMPPA-GMPPB mannose-1-phosphate guanylyltransferase complex composed of 4 GMPPA subunits and 8 GMPPB subunits; the complex is organized into three layers, a central layer made up of 2 GMPPA dimers sandwiched between two layers each made up of 2 GMPPB dimers.

Regulatory subunit of the GMPPA-GMPPB mannose-1-phosphate guanylyltransferase complex; reduces the catalytic activity of GMPPB when part of the complex. Mediates allosteric feedback inhibition of GMPPB catalytic activity upon binding GDP-alpha-D-mannose. Together with GMPPB regulates GDP-alpha-D-mannose levels. The polypeptide is Mannose-1-phosphate guanylyltransferase regulatory subunit alpha (Drosophila melanogaster (Fruit fly)).